The chain runs to 609 residues: MADSAVPYSLGPSARASSTHRVATGTKQTSALKRRDASKRQAELEAALQRKVESERRAVRLVEQLLEENITEEFLKECGMFITPAHYSDVVDERAIIKLCGYPLCQKKLGVIPKQKYRISTKTNKVYDITERKSFCSNFCYKASKFFEAQIPKTPVWVREEERPPEFQLLKKGQSGCSGEVVQFFRDAVTAADVDAYGAFDAQCEPASSSTWSERASDERASDEEGPGFVSSLLPGNRPKAVGTKPQPHRQSSTVKKKAAQKMTSKHGEQTVSEVTEQLSNCRLDSQEKVATCKLPAKKENTQISSPGPLCDRLNTSTVSENKHSVSQVTLVGISKKSAEHFRSKFAKSNPGSGSASGLVQVRPEVAKANLLRVLKDTLTEWKTDETLKFLYGQDHGSVCLQPSAASGPDEELDEDDISCQAQNTLDETLPFRGSDTAIKPLPSYESLKKETEMLNLRVREFYRGRCVLNEDSTKSQDSKENELQRDPSFPLIDSSSQNQIRRRIVLEKLSKVLPGLLGPLQITMGDIYTELKNLVQTFRLSNRNIIHKPVEWTLIAVVLLSLLTPILGIQKHSPKNVVFTQFIATLLTELHLKCEDLENLAMIFRTSC.

A disordered region spans residues 1 to 37 (MADSAVPYSLGPSARASSTHRVATGTKQTSALKRRDA). At A2 the chain carries N-acetylalanine. Phosphoserine is present on S9. The span at 15–31 (RASSTHRVATGTKQTSA) shows a compositional bias: polar residues. Positions 33 to 69 (KRRDASKRQAELEAALQRKVESERRAVRLVEQLLEEN) form a coiled coil. The segment at 77-160 (ECGMFITPAH…IPKTPVWVRE (84 aa)) adopts an RTR1-type zinc-finger fold. Residues C100, C105, C136, and C140 each coordinate Zn(2+). The tract at residues 208–272 (SSSTWSERAS…MTSKHGEQTV (65 aa)) is disordered. Phosphoserine is present on residues S222 and S476.

It belongs to the RPAP2 family. As to quaternary structure, associates with the RNA polymerase II complex. Interacts with transcribing RNA polymerase II phosphorylated on 'Ser-7' on CTD.

The protein localises to the cytoplasm. The protein resides in the nucleus. The enzyme catalyses O-phospho-L-seryl-[protein] + H2O = L-seryl-[protein] + phosphate. The catalysed reaction is O-phospho-L-threonyl-[protein] + H2O = L-threonyl-[protein] + phosphate. In terms of biological role, protein phosphatase that displays CTD phosphatase activity and regulates transcription of snRNA genes. Recognizes and binds phosphorylated 'Ser-7' of the C-terminal heptapeptide repeat domain (CTD) of the largest RNA polymerase II subunit POLR2A, and mediates dephosphorylation of 'Ser-5' of the CTD, thereby promoting transcription of snRNA genes. Downstream of EIF2AK3/PERK, dephosphorylates ERN1, a sensor for the endoplasmic reticulum unfolded protein response (UPR), to abort failed ER-stress adaptation and trigger apoptosis. In Rattus norvegicus (Rat), this protein is RNA polymerase II subunit B1 CTD phosphatase Rpap2 (Rpap2).